The following is a 170-amino-acid chain: MDSSQYRLKATLTQLCLCSRGVRNVTSEHPEQQDSSLTLWRPWLLRAGDRELDGQQRRLGEADGDHRNTGPKGALGFQHPVRLYMPKSKTSEYLQHMGKKVLANFPVQATIHFYNDDSDSEEEEEDDEMEFYNYYQNCAANGVNSSRGSGDNYSVPGGPKRNISSHTGSA.

The WRPW motif motif lies at 40–43 (WRPW). A ripply homology domain region spans residues 79-114 (HPVRLYMPKSKTSEYLQHMGKKVLANFPVQATIHFY). Over residues 143–152 (VNSSRGSGDN) the composition is skewed to polar residues. The tract at residues 143 to 170 (VNSSRGSGDNYSVPGGPKRNISSHTGSA) is disordered.

Belongs to the ripply family. In terms of assembly, interacts with tbx1 and tle4/grg4.

Its subcellular location is the nucleus. In terms of biological role, acts as a transcriptional corepressor. Negative regulator of the transcriptional activity of tbx1 that plays a key role in pharyngeal development. Plays a role in the formation of the anteroposterior (AP) axis during embryonic development; required to establish the posterolateral border of the pre-placodal ectoderm (PPE) acting downstream of the retinoic acid receptor (RAR) signaling. The sequence is that of Protein ripply3 from Xenopus tropicalis (Western clawed frog).